The following is a 367-amino-acid chain: 2-aminoethylphosphonate--pyruvate transaminase (367 aa).

The residue at position 194 (Lys-194) is an N6-(pyridoxal phosphate)lysine.

The protein belongs to the class-V pyridoxal-phosphate-dependent aminotransferase family. PhnW subfamily. In terms of assembly, homodimer. It depends on pyridoxal 5'-phosphate as a cofactor.

The catalysed reaction is (2-aminoethyl)phosphonate + pyruvate = phosphonoacetaldehyde + L-alanine. Functionally, involved in phosphonate degradation. This Salmonella dublin (strain CT_02021853) protein is 2-aminoethylphosphonate--pyruvate transaminase.